A 257-amino-acid polypeptide reads, in one-letter code: Dof zinc finger protein DOF5.3 (257 aa).

The interval 23-50 is disordered; that stretch reads LSYSSNPTPLDNDQKKPSPATAVTRPQP. The span at 24–33 shows a compositional bias: polar residues; sequence SYSSNPTPLD. The segment at 55–109 adopts a Dof-type zinc-finger fold; it reads LRCPRCDSTNTKFCYYNNYSLTQPRYFCKSCRRYWTKGGTLRNIPVGGGCRKNKR. Residues C57, C60, C82, and C85 each contribute to the Zn(2+) site. Residues 104–127 form a disordered region; that stretch reads CRKNKRSTSSAARSLRTTPEPASH. Over residues 110–121 the composition is skewed to low complexity; sequence STSSAARSLRTT.

As to expression, the PEAR proteins (e.g. DOF2.4, DOF5.1, DOF3.2, DOF1.1, DOF5.6 and DOF5.3) form a short-range concentration gradient that peaks at protophloem sieve elements (PSE). Accumulates in the stele.

The protein resides in the nucleus. Its function is as follows. Transcription factor that binds specifically to a 5'-AA[AG]G-3' consensus core sequence. The PEAR proteins (e.g. DOF2.4, DOF5.1, DOF3.2, DOF1.1, DOF5.6 and DOF5.3) activate gene expression that promotes radial growth of protophloem sieve elements. The sequence is that of Dof zinc finger protein DOF5.3 from Arabidopsis thaliana (Mouse-ear cress).